Reading from the N-terminus, the 344-residue chain is Probable aldo-keto reductase 1 (344 aa).

The active-site Proton donor is tyrosine 63. A substrate-binding site is contributed by histidine 130. 209–219 (SPLGLGFFAAG) provides a ligand contact to NADP(+).

This sequence belongs to the aldo/keto reductase family.

The protein is Probable aldo-keto reductase 1 of Arabidopsis thaliana (Mouse-ear cress).